The primary structure comprises 397 residues: NADH-quinone oxidoreductase subunit D (397 aa).

It belongs to the complex I 49 kDa subunit family. As to quaternary structure, NDH-1 is composed of 14 different subunits. Subunits NuoB, C, D, E, F, and G constitute the peripheral sector of the complex.

Its subcellular location is the cell inner membrane. The catalysed reaction is a quinone + NADH + 5 H(+)(in) = a quinol + NAD(+) + 4 H(+)(out). Its function is as follows. NDH-1 shuttles electrons from NADH, via FMN and iron-sulfur (Fe-S) centers, to quinones in the respiratory chain. The immediate electron acceptor for the enzyme in this species is believed to be ubiquinone. Couples the redox reaction to proton translocation (for every two electrons transferred, four hydrogen ions are translocated across the cytoplasmic membrane), and thus conserves the redox energy in a proton gradient. This Magnetococcus marinus (strain ATCC BAA-1437 / JCM 17883 / MC-1) protein is NADH-quinone oxidoreductase subunit D.